A 468-amino-acid polypeptide reads, in one-letter code: UDP-N-acetylmuramate--L-alanine ligase (468 aa).

117–123 (GTHGKTT) contributes to the ATP binding site.

It belongs to the MurCDEF family.

It localises to the cytoplasm. The catalysed reaction is UDP-N-acetyl-alpha-D-muramate + L-alanine + ATP = UDP-N-acetyl-alpha-D-muramoyl-L-alanine + ADP + phosphate + H(+). It functions in the pathway cell wall biogenesis; peptidoglycan biosynthesis. Its function is as follows. Cell wall formation. The protein is UDP-N-acetylmuramate--L-alanine ligase of Maricaulis maris (strain MCS10) (Caulobacter maris).